Consider the following 267-residue polypeptide: Phosphate import ATP-binding protein PstB 2 (267 aa).

Positions 21–262 (LATKDLHVYY…AQCQSTNDYV (242 aa)) constitute an ABC transporter domain. 53-60 (GPSGCGKS) lines the ATP pocket.

Belongs to the ABC transporter superfamily. Phosphate importer (TC 3.A.1.7) family. The complex is composed of two ATP-binding proteins (PstB), two transmembrane proteins (PstC and PstA) and a solute-binding protein (PstS).

It is found in the cell membrane. It carries out the reaction phosphate(out) + ATP + H2O = ADP + 2 phosphate(in) + H(+). Functionally, part of the ABC transporter complex PstSACB involved in phosphate import. Responsible for energy coupling to the transport system. The polypeptide is Phosphate import ATP-binding protein PstB 2 (Streptococcus pyogenes serotype M1).